The sequence spans 229 residues: Large ribosomal subunit protein uL1 (229 aa).

It belongs to the universal ribosomal protein uL1 family. As to quaternary structure, part of the 50S ribosomal subunit.

Its function is as follows. Binds directly to 23S rRNA. The L1 stalk is quite mobile in the ribosome, and is involved in E site tRNA release. In terms of biological role, protein L1 is also a translational repressor protein, it controls the translation of the L11 operon by binding to its mRNA. The protein is Large ribosomal subunit protein uL1 of Pediococcus pentosaceus (strain ATCC 25745 / CCUG 21536 / LMG 10740 / 183-1w).